We begin with the raw amino-acid sequence, 112 residues long: ATP synthase epsilon chain (112 aa).

Belongs to the ATPase epsilon chain family. As to quaternary structure, F-type ATPases have 2 components, CF(1) - the catalytic core - and CF(0) - the membrane proton channel. CF(1) has five subunits: alpha(3), beta(3), gamma(1), delta(1), epsilon(1). CF(0) has three main subunits: a, b and c.

Its subcellular location is the cell inner membrane. Produces ATP from ADP in the presence of a proton gradient across the membrane. The protein is ATP synthase epsilon chain (atpC) of Rickettsia conorii (strain ATCC VR-613 / Malish 7).